Consider the following 363-residue polypeptide: 3-isopropylmalate dehydrogenase (363 aa).

Gly78–Glu91 lines the NAD(+) pocket. Residues Arg99, Arg109, Arg138, and Asp227 each coordinate substrate. Mg(2+) is bound by residues Asp227, Asp251, and Asp255. Residue Gly285–Asn297 coordinates NAD(+).

Belongs to the isocitrate and isopropylmalate dehydrogenases family. LeuB type 1 subfamily. In terms of assembly, homodimer. Requires Mg(2+) as cofactor. Mn(2+) serves as cofactor.

It localises to the cytoplasm. The catalysed reaction is (2R,3S)-3-isopropylmalate + NAD(+) = 4-methyl-2-oxopentanoate + CO2 + NADH. It participates in amino-acid biosynthesis; L-leucine biosynthesis; L-leucine from 3-methyl-2-oxobutanoate: step 3/4. Its function is as follows. Catalyzes the oxidation of 3-carboxy-2-hydroxy-4-methylpentanoate (3-isopropylmalate) to 3-carboxy-4-methyl-2-oxopentanoate. The product decarboxylates to 4-methyl-2 oxopentanoate. The protein is 3-isopropylmalate dehydrogenase of Pectobacterium atrosepticum (strain SCRI 1043 / ATCC BAA-672) (Erwinia carotovora subsp. atroseptica).